A 610-amino-acid chain; its full sequence is MIQVLLVTISLAVFPYQGSSVILESGNVNDYEVVYPRKVTALPKGAVQPKYEDTMQYEFKVNGEPVVLHLEKNKGLFSEDYSETHYSPDGREITTYPTVEDHCYYHGRIENDADSTASISACNGLKGHFKLQGEMYLIEPLKLPDSEAHAVFKYENVEKEDEAPKMCGVTQNWESYEPIKKASQSNLTPEQQRYLNAKKYVKLFLVADYIMYLKYGRNLTAVRTRMYDIVNVITPIYHRMNIHVALVGLEIWSNTDKIIVQSSADVTLNLFGNWRATDLLRRKSHDNAQLLTGINFNGPTAGLAYLGGICNTMYSAGIVQDHSKIHHLVAIAMAHEMGHNLGMDHDKDTCTCGTRPCVMAGALSCEASFLFSDCSQKDHREFLIKNMPQCILKKPLKTDVVSPAVCGNYFVEVGEECDCGSPRTCRDPCCDATTCKLRQGAQCAEGLCCDQCRFKGAGTECRAAKDECDMADVCTGRSAECTDSFQRNGQPCKNNNGYCYNGKCPIMADQCIALFGPSATVSQDACFQFNREGNHYGYCRKEQNTKIACEPQDVKCGRLYCFPNSPENKNPCNIYYSPNDEDKGMVLPGTKCADGKACSNGQCVDVTTPY.

An N-terminal signal peptide occupies residues 1-20 (MIQVLLVTISLAVFPYQGSS). A propeptide spanning residues 21–189 (VILESGNVND…KKASQSNLTP (169 aa)) is cleaved from the precursor. The Peptidase M12B domain maps to 199–395 (KYVKLFLVAD…NMPQCILKKP (197 aa)). Asn-218 carries N-linked (GlcNAc...) asparagine glycosylation. Asp-286 serves as a coordination point for Ca(2+). 3 cysteine pairs are disulfide-bonded: Cys-310–Cys-390, Cys-350–Cys-374, and Cys-352–Cys-357. His-335 provides a ligand contact to Zn(2+). Glu-336 is an active-site residue. His-339 and His-345 together coordinate Zn(2+). The Ca(2+) site is built by Cys-390, Val-405, Asn-408, Phe-410, Glu-412, Glu-415, and Asp-418. Residues 403–488 (PAVCGNYFVE…AECTDSFQRN (86 aa)) enclose the Disintegrin domain. Cystine bridges form between Cys-406–Cys-435, Cys-417–Cys-430, Cys-419–Cys-425, Cys-429–Cys-452, Cys-443–Cys-449, Cys-448–Cys-474, Cys-461–Cys-481, Cys-468–Cys-499, Cys-492–Cys-504, Cys-511–Cys-561, Cys-526–Cys-572, Cys-539–Cys-549, Cys-556–Cys-598, and Cys-592–Cys-603. The D/ECD-tripeptide signature appears at 467 to 469 (ECD).

Belongs to the venom metalloproteinase (M12B) family. P-III subfamily. Zn(2+) is required as a cofactor. As to expression, expressed by the venom gland.

The protein localises to the secreted. Its function is as follows. Snake venom metalloproteinase that impairs hemostasis in the envenomed animal. This chain is Zinc metalloproteinase-disintegrin-like 4a, found in Crotalus adamanteus (Eastern diamondback rattlesnake).